Here is a 436-residue protein sequence, read N- to C-terminus: Enolase (436 aa).

(2R)-2-phosphoglycerate is bound at residue glutamine 167. The active-site Proton donor is glutamate 209. Mg(2+)-binding residues include aspartate 246, glutamate 291, and aspartate 318. (2R)-2-phosphoglycerate contacts are provided by lysine 343, arginine 372, serine 373, and lysine 394. Lysine 343 acts as the Proton acceptor in catalysis.

It belongs to the enolase family. In terms of assembly, component of the RNA degradosome, a multiprotein complex involved in RNA processing and mRNA degradation. Mg(2+) is required as a cofactor.

Its subcellular location is the cytoplasm. The protein localises to the secreted. The protein resides in the cell surface. The catalysed reaction is (2R)-2-phosphoglycerate = phosphoenolpyruvate + H2O. Its pathway is carbohydrate degradation; glycolysis; pyruvate from D-glyceraldehyde 3-phosphate: step 4/5. Catalyzes the reversible conversion of 2-phosphoglycerate (2-PG) into phosphoenolpyruvate (PEP). It is essential for the degradation of carbohydrates via glycolysis. This is Enolase from Haemophilus influenzae (strain PittEE).